Consider the following 437-residue polypeptide: Glutamate-1-semialdehyde 2,1-aminomutase (437 aa).

Lys-273 bears the N6-(pyridoxal phosphate)lysine mark.

The protein belongs to the class-III pyridoxal-phosphate-dependent aminotransferase family. HemL subfamily. As to quaternary structure, homodimer. Pyridoxal 5'-phosphate is required as a cofactor.

It localises to the cytoplasm. It catalyses the reaction (S)-4-amino-5-oxopentanoate = 5-aminolevulinate. The protein operates within porphyrin-containing compound metabolism; protoporphyrin-IX biosynthesis; 5-aminolevulinate from L-glutamyl-tRNA(Glu): step 2/2. The sequence is that of Glutamate-1-semialdehyde 2,1-aminomutase from Chlamydia abortus (strain DSM 27085 / S26/3) (Chlamydophila abortus).